The primary structure comprises 247 residues: MNVLSCSINTLKGLYDISGVEVGQHFYWKIGGFQVHGQVLITSWVVIAILLGSATIAVRNPQTIPTGGQNFFEYVLEFIRDVSKTQIGEEYGPWVPFIGTMFLFIFVSNWSGALLPWKIIQLPHGELAAPTNDINTTVALALLTSVAYFYAGLTKKGLGYFGKYIQPTPILLPINILEDFTKPLSLSFRLFGDILADELVVVVLVSLVPSVVPIPVMFLGLFTSGIQALIFATLAAAYIGESMEGHH.

5 consecutive transmembrane segments (helical) span residues 38-58, 95-115, 134-154, 199-219, and 220-240; these read QVLI…TIAV, VPFI…GALL, INTT…AGLT, LVVV…VMFL, and GLFT…AYIG.

This sequence belongs to the ATPase A chain family. As to quaternary structure, F-type ATPases have 2 components, CF(1) - the catalytic core - and CF(0) - the membrane proton channel. CF(1) has five subunits: alpha(3), beta(3), gamma(1), delta(1), epsilon(1). CF(0) has four main subunits: a, b, b' and c.

It localises to the plastid. Its subcellular location is the chloroplast thylakoid membrane. Functionally, key component of the proton channel; it plays a direct role in the translocation of protons across the membrane. This is ATP synthase subunit a, chloroplastic from Panax ginseng (Korean ginseng).